A 311-amino-acid chain; its full sequence is Halocin-S8 (311 aa).

2 consecutive propeptides follow at residues 1 to 230 (MSDK…IQLQ) and 267 to 311 (TVAC…TSFW).

The protein resides in the secreted. In terms of biological role, has antibacterial activity against the haloarchaeons H.salinarium NRC817, Halobacterium GRB and H.gibbonsii. The chain is Halocin-S8 (halS8) from Haloarchaeon S8a.